Reading from the N-terminus, the 130-residue chain is Small ribosomal subunit protein uS8B (130 aa).

Belongs to the universal ribosomal protein uS8 family.

The protein is Small ribosomal subunit protein uS8B (RpS15Ab) of Drosophila melanogaster (Fruit fly).